The sequence spans 206 residues: Large ribosomal subunit protein uL4 (206 aa).

Residues 43–78 (ARSGNRAQKDREQVKHTTKKPWRQKGTGRARAGMSS) are disordered. Basic residues predominate over residues 58–70 (HTTKKPWRQKGTG).

The protein belongs to the universal ribosomal protein uL4 family. As to quaternary structure, part of the 50S ribosomal subunit.

Its function is as follows. One of the primary rRNA binding proteins, this protein initially binds near the 5'-end of the 23S rRNA. It is important during the early stages of 50S assembly. It makes multiple contacts with different domains of the 23S rRNA in the assembled 50S subunit and ribosome. Functionally, forms part of the polypeptide exit tunnel. The sequence is that of Large ribosomal subunit protein uL4 from Polynucleobacter necessarius subsp. necessarius (strain STIR1).